The primary structure comprises 227 residues: MSESDTDPDIDDDAHNNGDNDVDVAVDESESAETTTDTDTASANAKLFGEWDVSEIEYEDPSTQRYITVTPIAHTMGRHAAKQFEKSKISVVERLINRLMQTEDNTGHKQKTMNIVEDAFDTIHNRTEENPVQVLVRGVENAAPREETVRLKYGGISVPQAVDVAPQRRVDQALKFIADGTQRGSYKSAQSAADSLAQVIIGAANYDVQSYAVGQKEESERVAEAAR.

Acidic residues-rich tracts occupy residues 1-12 (MSESDTDPDIDD) and 20-31 (NDVDVAVDESES). The segment at 1–43 (MSESDTDPDIDDDAHNNGDNDVDVAVDESESAETTTDTDTASA) is disordered. The segment covering 32–43 (AETTTDTDTASA) has biased composition (low complexity).

This sequence belongs to the universal ribosomal protein uS7 family. As to quaternary structure, part of the 30S ribosomal subunit.

In terms of biological role, one of the primary rRNA binding proteins, it binds directly to 16S rRNA where it nucleates assembly of the head domain of the 30S subunit. Is located at the subunit interface close to the decoding center. The sequence is that of Small ribosomal subunit protein uS7 from Haloquadratum walsbyi (strain DSM 16790 / HBSQ001).